A 146-amino-acid chain; its full sequence is Snaclec stejaggregin-B subunit beta-2 (146 aa).

Residues 1-23 form the signal peptide; that stretch reads MGRFIFVSFGLLVVFLSLSGSGA. The region spanning 32–143 is the C-type lectin domain; that stretch reads YDLYCYRVFQ…CSQTYPFVCK (112 aa). Cystine bridges form between Cys-53–Cys-142 and Cys-119–Cys-134.

The protein belongs to the snaclec family. As to quaternary structure, heteromultimer; disulfide-linked. In terms of tissue distribution, expressed by the venom gland.

It localises to the secreted. In terms of biological role, interferes with one step of hemostasis (modulation of platelet aggregation, or coagulation cascade, for example). The polypeptide is Snaclec stejaggregin-B subunit beta-2 (Trimeresurus stejnegeri (Chinese green tree viper)).